Here is a 303-residue protein sequence, read N- to C-terminus: 1D-myo-inositol 2-acetamido-2-deoxy-alpha-D-glucopyranoside deacetylase (303 aa).

3 residues coordinate Zn(2+): His-13, Asp-16, and His-147.

The protein belongs to the MshB deacetylase family. It depends on Zn(2+) as a cofactor.

The catalysed reaction is 1D-myo-inositol 2-acetamido-2-deoxy-alpha-D-glucopyranoside + H2O = 1D-myo-inositol 2-amino-2-deoxy-alpha-D-glucopyranoside + acetate. In terms of biological role, catalyzes the deacetylation of 1D-myo-inositol 2-acetamido-2-deoxy-alpha-D-glucopyranoside (GlcNAc-Ins) in the mycothiol biosynthesis pathway. The protein is 1D-myo-inositol 2-acetamido-2-deoxy-alpha-D-glucopyranoside deacetylase of Mycobacterium tuberculosis (strain ATCC 25177 / H37Ra).